The following is a 1448-amino-acid chain: MPITKAEAQGVTRAFVRDYPGALELAYKFREDAAELYGPRAAEVPADMKGGYVPKETLHAGRAYRGRVDVPLQNVESASDLLMTLRHEVLGHYGANTFAPGEKRALLDGLAAARNEPTLKPLWDDVNRRYAGQSLDVRAEEVFALHCEGIEPSQHQVADQVQQRGQQSFTETCIARVRPMQADDLHNIVCMVAQGLRDRSRTQQNFPQFNELFRRDENMEPKKPFHEVVAEKLIEQLKAGTAPWQKPWEPGEPNAYLPMNPTTGKRYKGINAIHLMAQGRSDARWMTYKQAAAVGAQVRKGEKGTPVQYWKFSEEQDKLDDSGRPVLDAKGQPVKETVMLERPRVFFATVFNGEQIDGLPPLQPKKEQTWNAVERAEHILKASGATITHAAGDRAFYRPSTDSITLPERGQFPSSDRYYATALHELGHWTGHASRLDRDLAHPFGSEGYAKEELRAEIASMIVGDELGIGHDPGQHAAYVGSWIKALQDEPLEVFRAAADAEKIHDYVLAFEQKQVQEQDQQQSQAQDEAVAQALAVDIAEVLDNPDVSFSHYQAFQGDTLEDALRSRGLETVGSITGTDPEQFYAVAHDRLSPVFGIDPSHTDTDNAYLERKGLAQEFANMAEQLHLAQQLQQHGEQIVSSIDAEARWSDGQRIFAFHDQDGEPHQVRSLDELNNYAPDQLMALPALTQQQAAVADQEANMTPPTIDQAAALLAAHPADAVQGIEQAAAARRQLAAGEIDGQAFADATRQHLGVELPPDWSGELRIVGVAEQDGQTVDAAQAGIEPQAFQVYARKADAQFGEDAFAFVAGTRTEGQAEALAERLHLVDALGTDNQHERAAKLARVQEERVRRDPNATEEDISAAKEARKTAEASAMLNDSDAQRRAAELERQERDRQQAQPQAEKPERQYINVPYKEKDEAKSLGARWDRQQQSWYVPPGTDAAPFAKWAQGAATAAVEPRSAQPAPEAQGEAQKPAQQAQQARQYLAVPYEQRNAAKAAGALWDKAAKSWYVGPRADAAKLERWKPENVQAQQGPAMTPREEFAEAMRSAGLFTGSNAQGDHPIMDGKRHRVPVEGGKKGALDGFYVGHLDGHPAGRIINNKTGTDITWKSKGYALSDQEKAKLQAEAAEKLAQRAVEQDKAQEATAQRVGRQMADLVPIEQPTPYLQAKGIQAQAGVMTDREGQKTYIPAFDAEGKQWTMQYIQEDGTKRFAKDSKKEGCFHPVGGMDALAAAPALVISEGYATAAQVAEAVGHATVAAFDSGNLEAVAKALHAKFPDKPVIIAGDDDRHLVMTHGNNPGREKAEAAAQAVGGKAIFPIFAPAENTYPRDLPAITPDSFKTHLRAEQRLADAAAGKVELAGDEAAKLKASMLSGAQIAALSTMKQHTDFNDLAHKSELGIEGVKRQIGAAISQVQRDEQQHQEQKHVEKKQQQIEQRPRRAARIG.

3 stretches are compositionally biased toward basic and acidic residues: residues 844–856 (ARVQ…RDPN), 863–872 (SAAKEARKTA), and 882–898 (DAQR…RDRQ). Disordered stretches follow at residues 844–915 (ARVQ…INVP) and 952–982 (QGAA…QQAQ). Positions 964 to 982 (AQPAPEAQGEAQKPAQQAQ) are enriched in low complexity. Residues 1237–1325 (PALVISEGYA…GKAIFPIFAP (89 aa)) enclose the Toprim domain. Positions 1414–1448 (ISQVQRDEQQHQEQKHVEKKQQQIEQRPRRAARIG) are disordered. Residues 1418-1441 (QRDEQQHQEQKHVEKKQQQIEQRP) are compositionally biased toward basic and acidic residues.

Functionally, required for autonomous replication in E.coli. Transferred into the recipient cell during bacterial conjugation. Catalyzes the synthesis of short oligoribonucleotide primers with CpA or pCpA at their 5'-termini on a single-stranded template DNA. The polypeptide is DNA primase TraC (traC) (Escherichia coli).